A 101-amino-acid chain; its full sequence is Small ribosomal subunit protein uS14 (101 aa).

Belongs to the universal ribosomal protein uS14 family. As to quaternary structure, part of the 30S ribosomal subunit. Contacts proteins S3 and S10.

Its function is as follows. Binds 16S rRNA, required for the assembly of 30S particles and may also be responsible for determining the conformation of the 16S rRNA at the A site. The protein is Small ribosomal subunit protein uS14 of Maricaulis maris (strain MCS10) (Caulobacter maris).